We begin with the raw amino-acid sequence, 882 residues long: Alanine--tRNA ligase (882 aa).

4 residues coordinate Zn(2+): His570, His574, Cys672, and His676.

It belongs to the class-II aminoacyl-tRNA synthetase family. Requires Zn(2+) as cofactor.

The protein resides in the cytoplasm. It carries out the reaction tRNA(Ala) + L-alanine + ATP = L-alanyl-tRNA(Ala) + AMP + diphosphate. In terms of biological role, catalyzes the attachment of alanine to tRNA(Ala) in a two-step reaction: alanine is first activated by ATP to form Ala-AMP and then transferred to the acceptor end of tRNA(Ala). Also edits incorrectly charged Ser-tRNA(Ala) and Gly-tRNA(Ala) via its editing domain. The polypeptide is Alanine--tRNA ligase (Xanthomonas campestris pv. campestris (strain 8004)).